A 357-amino-acid polypeptide reads, in one-letter code: uncharacterized protein (357 aa).

3 helical membrane passes run 21 to 41 (FIKI…LFSW), 86 to 106 (FFCL…CTLF), and 135 to 155 (GGFV…PVIF). Disordered regions lie at residues 184–229 (DKNK…AMSD) and 283–357 (KAGS…NKRN). A compositionally biased stretch (low complexity) spans 195–223 (TTNTTNFSGNGSSSSTTNATSSSSSQANN). 2 stretches are compositionally biased toward basic and acidic residues: residues 305–314 (KIEEYDNQKQ) and 322–337 (KETN…EKET). Positions 305–337 (KIEEYDNQKQEEEENEEKETNKQQTQKDDEKET) form a coiled coil. Positions 346 to 357 (KKSKKGKKNKRN) are enriched in basic residues.

It localises to the membrane. This is an uncharacterized protein from Dictyostelium discoideum (Social amoeba).